The chain runs to 150 residues: SsrA-binding protein (150 aa).

It belongs to the SmpB family.

It localises to the cytoplasm. Functionally, required for rescue of stalled ribosomes mediated by trans-translation. Binds to transfer-messenger RNA (tmRNA), required for stable association of tmRNA with ribosomes. tmRNA and SmpB together mimic tRNA shape, replacing the anticodon stem-loop with SmpB. tmRNA is encoded by the ssrA gene; the 2 termini fold to resemble tRNA(Ala) and it encodes a 'tag peptide', a short internal open reading frame. During trans-translation Ala-aminoacylated tmRNA acts like a tRNA, entering the A-site of stalled ribosomes, displacing the stalled mRNA. The ribosome then switches to translate the ORF on the tmRNA; the nascent peptide is terminated with the 'tag peptide' encoded by the tmRNA and targeted for degradation. The ribosome is freed to recommence translation, which seems to be the essential function of trans-translation. In Campylobacter jejuni subsp. jejuni serotype O:6 (strain 81116 / NCTC 11828), this protein is SsrA-binding protein.